Reading from the N-terminus, the 155-residue chain is Transcriptional regulator MraZ (155 aa).

SpoVT-AbrB domains follow at residues 7 to 54 and 83 to 126; these read TYEC…PMEE and VKTV…DKDK.

It belongs to the MraZ family. As to quaternary structure, forms oligomers.

Its subcellular location is the cytoplasm. The protein resides in the nucleoid. The sequence is that of Transcriptional regulator MraZ from Christiangramia forsetii (strain DSM 17595 / CGMCC 1.15422 / KT0803) (Gramella forsetii).